Here is a 126-residue protein sequence, read N- to C-terminus: Large ribosomal subunit protein bL20c (126 aa).

This sequence belongs to the bacterial ribosomal protein bL20 family.

The protein resides in the plastid. The protein localises to the chloroplast. In terms of biological role, binds directly to 23S ribosomal RNA and is necessary for the in vitro assembly process of the 50S ribosomal subunit. It is not involved in the protein synthesizing functions of that subunit. In Pelargonium hortorum (Common geranium), this protein is Large ribosomal subunit protein bL20c.